Reading from the N-terminus, the 307-residue chain is Serine/threonine-protein phosphatase 4 catalytic subunit (307 aa).

Residues D54, H56, D82, and N114 each contribute to the Mn(2+) site. The active-site Proton donor is H115. Mn(2+) is bound by residues H164 and H238. At L307 the chain carries Leucine methyl ester.

It belongs to the PPP phosphatase family. PP-4 (PP-X) subfamily. As to quaternary structure, serine/threonine-protein phosphatase 4 (PP4) occurs in different assemblies of the catalytic and one or more regulatory subunits. Mn(2+) is required as a cofactor.

It is found in the cytoplasm. Its subcellular location is the nucleus. It localises to the cytoskeleton. The protein localises to the microtubule organizing center. The protein resides in the centrosome. It carries out the reaction O-phospho-L-seryl-[protein] + H2O = L-seryl-[protein] + phosphate. The catalysed reaction is O-phospho-L-threonyl-[protein] + H2O = L-threonyl-[protein] + phosphate. In terms of biological role, protein phosphatase that regulates many processes such as microtubule organization at centrosomes. The sequence is that of Serine/threonine-protein phosphatase 4 catalytic subunit (ppp4c) from Xenopus laevis (African clawed frog).